Consider the following 239-residue polypeptide: Probable transcriptional regulatory protein BAA_0622 (239 aa).

The protein belongs to the TACO1 family. YeeN subfamily.

The protein localises to the cytoplasm. The sequence is that of Probable transcriptional regulatory protein BAA_0622 from Bacillus anthracis (strain A0248).